Reading from the N-terminus, the 117-residue chain is Large ribosomal subunit protein eL34 (117 aa).

The protein belongs to the eukaryotic ribosomal protein eL34 family. In terms of assembly, component of the large ribosomal subunit.

The protein resides in the cytoplasm. It localises to the cytosol. The protein localises to the endoplasmic reticulum. Its function is as follows. Component of the large ribosomal subunit. The ribosome is a large ribonucleoprotein complex responsible for the synthesis of proteins in the cell. The polypeptide is Large ribosomal subunit protein eL34 (rpl34) (Ictalurus punctatus (Channel catfish)).